The chain runs to 444 residues: Abhydrolase domain-containing protein abhd-5.2 (444 aa).

An AB hydrolase-1 domain is found at 162–409 (PIVLIHGFGA…SAGHHVYADD (248 aa)).

Belongs to the peptidase S33 family. ABHD4/ABHD5 subfamily. Interacts with atgl-1; the interaction tethers atgl-1 to lipid droplets. As to expression, expressed in the hypodermis and intestine.

The protein localises to the lipid droplet. Functionally, acts coordinately with phospholipase atgl-1 within the lipolytic cascade to distribute stored energy to tissues to maintain energy levels during the dauer phase. Localizes atgl-1 to lipid droplets, possibly to facilitate triglyceride hydrolysis. Regulates lipid droplet size, lipid content, the exchange of lipids between lipid droplets and fusion of lipid droplets during the dauer phase. In Caenorhabditis elegans, this protein is Abhydrolase domain-containing protein abhd-5.2.